A 348-amino-acid chain; its full sequence is Phospho-2-dehydro-3-deoxyheptonate aldolase, Trp-sensitive (348 aa).

The protein belongs to the class-I DAHP synthase family.

The enzyme catalyses D-erythrose 4-phosphate + phosphoenolpyruvate + H2O = 7-phospho-2-dehydro-3-deoxy-D-arabino-heptonate + phosphate. It participates in metabolic intermediate biosynthesis; chorismate biosynthesis; chorismate from D-erythrose 4-phosphate and phosphoenolpyruvate: step 1/7. In terms of biological role, stereospecific condensation of phosphoenolpyruvate (PEP) and D-erythrose-4-phosphate (E4P) giving rise to 3-deoxy-D-arabino-heptulosonate-7-phosphate (DAHP). In Salmonella typhimurium (strain LT2 / SGSC1412 / ATCC 700720), this protein is Phospho-2-dehydro-3-deoxyheptonate aldolase, Trp-sensitive (aroH).